The sequence spans 354 residues: MKKIIMTGGGTAGHVTPNLALVPELKKLGYEIKYIGSIEGIERKIIEKEGIEYFPISSGKLRRYFDLKNFSDPFKVLKGVFQAKKIIKREKPDIVFSKGGFVTVPVVIAAHLNKIPVIAHESDITPGLANKLATPYCTRVCVTFPESVKHIKGDKAVLTGTPIRRELLEGNKLEGIKLCGFKDNKPILLIIGGSLGSKIINEIVRKNLDNILSKFNIIHICGKSNLDENLENRKGYAQFEYVNEELPDLMKASDLVISRAGANVIYELLALKKPNLLIPLSKKSSRGDQILNAASFEKSGYSLVLKEEELEDKNLMKKLNYLYENRNVYINNMSKSKMDNGVKNITELIKKYTK.

Residues 11–13 (TAG), R164, S194, and Q289 each bind UDP-N-acetyl-alpha-D-glucosamine.

It belongs to the glycosyltransferase 28 family. MurG subfamily.

The protein localises to the cell membrane. It carries out the reaction di-trans,octa-cis-undecaprenyl diphospho-N-acetyl-alpha-D-muramoyl-L-alanyl-D-glutamyl-meso-2,6-diaminopimeloyl-D-alanyl-D-alanine + UDP-N-acetyl-alpha-D-glucosamine = di-trans,octa-cis-undecaprenyl diphospho-[N-acetyl-alpha-D-glucosaminyl-(1-&gt;4)]-N-acetyl-alpha-D-muramoyl-L-alanyl-D-glutamyl-meso-2,6-diaminopimeloyl-D-alanyl-D-alanine + UDP + H(+). It functions in the pathway cell wall biogenesis; peptidoglycan biosynthesis. In terms of biological role, cell wall formation. Catalyzes the transfer of a GlcNAc subunit on undecaprenyl-pyrophosphoryl-MurNAc-pentapeptide (lipid intermediate I) to form undecaprenyl-pyrophosphoryl-MurNAc-(pentapeptide)GlcNAc (lipid intermediate II). The protein is UDP-N-acetylglucosamine--N-acetylmuramyl-(pentapeptide) pyrophosphoryl-undecaprenol N-acetylglucosamine transferase of Clostridium botulinum (strain Kyoto / Type A2).